An 865-amino-acid chain; its full sequence is General transcription factor 3C polypeptide 5 (865 aa).

5 disordered regions span residues 1–21 (MNDE…NNNS), 111–163 (RPNK…NEKF), 191–215 (NNNT…TVPI), 391–522 (QDNH…NKEG), and 669–865 (DNKM…EESE). Low complexity-rich tracts occupy residues 7–21 (KNNS…NNNS), 115–126 (QQTQTQTQTQTQ), 140–158 (QSPK…QQPQ), 199–210 (DNVNDSSSSSSS), and 401–411 (SKNNNNNNNNK). 2 stretches are compositionally biased toward basic and acidic residues: residues 412–439 (DSIK…KQEE) and 448–489 (NNEK…KGDD). Composition is skewed to low complexity over residues 508 to 521 (EGNN…NNKE) and 677 to 696 (RSNT…PKST). Composition is skewed to basic and acidic residues over residues 697-713 (QPKE…EPRP), 757-766 (QNKEIDESLK), and 773-786 (MEKD…KNEE). Composition is skewed to acidic residues over residues 800-820 (DYDD…DFDG) and 839-865 (EDSE…EESE).

It belongs to the TFIIIC subunit 5 family. As to quaternary structure, part of the TFIIIC complex.

It localises to the nucleus. Involved in RNA polymerase III-mediated transcription. Integral, tightly associated component of the DNA-binding TFIIIC2 subcomplex that directly binds tRNA and virus-associated RNA promoters. The polypeptide is General transcription factor 3C polypeptide 5 (gtf3c5) (Dictyostelium discoideum (Social amoeba)).